Reading from the N-terminus, the 1071-residue chain is ATP-dependent helicase/deoxyribonuclease subunit B (1071 aa).

It belongs to the helicase family. AddB/RexB type 2 subfamily. Heterodimer of AddA and RexB. Requires Mg(2+) as cofactor.

Functionally, the heterodimer acts as both an ATP-dependent DNA helicase and an ATP-dependent, dual-direction single-stranded exonuclease. Recognizes the chi site generating a DNA molecule suitable for the initiation of homologous recombination. This subunit has 5' -&gt; 3' nuclease activity but not helicase activity. The polypeptide is ATP-dependent helicase/deoxyribonuclease subunit B (Streptococcus pyogenes serotype M12 (strain MGAS9429)).